Here is a 71-residue protein sequence, read N- to C-terminus: Protein bdm (71 aa).

This is Protein bdm (bdm) from Escherichia coli (strain K12).